The sequence spans 442 residues: Protein translocase subunit SecY (442 aa).

10 consecutive transmembrane segments (helical) span residues 29–49, 69–89, 126–146, 153–173, 182–202, 217–237, 274–294, 320–340, 377–397, and 400–420; these read LITIGLLILVRVGIFIPVPDI, IFTGGGLSTVGIFALGILPYI, YIAFGWCIIQGLGLTVGLLRP, PLFIFQTVLAITAGSMFVMWI, IGNGASLLIFVNIVATLPQTL, ITAVVLLMLVFLVMIVGIVFV, VMPIIFASAVLILPSSLAGFA, VYTVVYSVMIFFFSYFYASLI, LTFLGAIFLSFVATLPIFVEQ, and GVTTFQGLGATSLLILVGVAI.

Belongs to the SecY/SEC61-alpha family. In terms of assembly, component of the Sec protein translocase complex. Heterotrimer consisting of SecY, SecE and SecG subunits. The heterotrimers can form oligomers, although 1 heterotrimer is thought to be able to translocate proteins. Interacts with the ribosome. Interacts with SecDF, and other proteins may be involved. Interacts with SecA.

It localises to the cell inner membrane. Its subcellular location is the cellular thylakoid membrane. The central subunit of the protein translocation channel SecYEG. Consists of two halves formed by TMs 1-5 and 6-10. These two domains form a lateral gate at the front which open onto the bilayer between TMs 2 and 7, and are clamped together by SecE at the back. The channel is closed by both a pore ring composed of hydrophobic SecY resides and a short helix (helix 2A) on the extracellular side of the membrane which forms a plug. The plug probably moves laterally to allow the channel to open. The ring and the pore may move independently. The chain is Protein translocase subunit SecY from Synechocystis sp. (strain ATCC 27184 / PCC 6803 / Kazusa).